A 548-amino-acid polypeptide reads, in one-letter code: Membrane protein insertase YidC (548 aa).

A helical membrane pass occupies residues 6 to 26 (NLLIIALLFVSFMIWQAWEQD). The disordered stretch occupies residues 28–52 (NPQPQQQTTQTTTTAAGSAADQGVP). Low complexity predominate over residues 29–41 (PQPQQQTTQTTTT). The next 4 membrane-spanning stretches (helical) occupy residues 345-365 (KFIH…TFIV), 420-440 (LGGC…YYML), 458-478 (LSAQ…MFFI), and 499-519 (PVIF…YYIV).

It belongs to the OXA1/ALB3/YidC family. Type 1 subfamily. Interacts with the Sec translocase complex via SecD. Specifically interacts with transmembrane segments of nascent integral membrane proteins during membrane integration.

It is found in the cell inner membrane. Functionally, required for the insertion and/or proper folding and/or complex formation of integral membrane proteins into the membrane. Involved in integration of membrane proteins that insert both dependently and independently of the Sec translocase complex, as well as at least some lipoproteins. Aids folding of multispanning membrane proteins. This chain is Membrane protein insertase YidC, found in Klebsiella pneumoniae subsp. pneumoniae (strain ATCC 700721 / MGH 78578).